The following is a 110-amino-acid chain: Putative pterin-4-alpha-carbinolamine dehydratase (110 aa).

The protein belongs to the pterin-4-alpha-carbinolamine dehydratase family.

The enzyme catalyses (4aS,6R)-4a-hydroxy-L-erythro-5,6,7,8-tetrahydrobiopterin = (6R)-L-erythro-6,7-dihydrobiopterin + H2O. The chain is Putative pterin-4-alpha-carbinolamine dehydratase from Vibrio vulnificus (strain CMCP6).